Reading from the N-terminus, the 542-residue chain is MASVETLLQGVTISGPIEEHQRKILTPQALSFVALLHRSFNQTRKNLLERRQLRQAEIDRGVLPDFLPETKHIRENPTWKGAPPAPGLVDRRVEITGPTDRKMVVNALNSDVYTYMADFEDSSAPTWANMVNGQVNLYDAIRRQIDFKQGPKEYKLRTDRTLPTLIVRPRGWHLEEKHVTIDGEPVSGSLFDFGLYFFHNAKELVQRGFGPYFYLPKMESHLEARLWNDAFNLAQDYVGIPRGTIRGTVLIETILAAFEMDEIIYELREHSSGLNCGRWDYIFSTIKKFRNHSSFVLPDRSCVTMTVPFMDAYVKLLIQTCHKRGVHAMGGMAAQIPIKDDKAANDKAMEGVRADKLREARAGHDGTWVAHPALASIALEVFNKHMPTPNQLFNRREDVKIGQQDLLNMNVPGSITEEGIRKNLNIGLGYMEAWIRGVGCVPINYLMEDAATAEVSRSQLWQWVKHGVTTAEGKRVDKSYALKLLKEQTDELASKAPQGNKFNLAAQYFATQVTGEDYADFLTSLLYNEITSAGNSLPASKL.

R168 serves as the catalytic Proton acceptor. The active-site Proton donor is D449. The Microbody targeting signal signature appears at S540–L542.

The protein belongs to the malate synthase family.

It is found in the glyoxysome. The enzyme catalyses glyoxylate + acetyl-CoA + H2O = (S)-malate + CoA + H(+). The protein operates within carbohydrate metabolism; glyoxylate cycle; (S)-malate from isocitrate: step 2/2. The protein is Malate synthase, glyoxysomal (acu-9) of Neurospora crassa (strain ATCC 24698 / 74-OR23-1A / CBS 708.71 / DSM 1257 / FGSC 987).